The sequence spans 722 residues: Capsid protein VP1 (722 aa).

The segment at 14–59 is phospholipase A2-like; that stretch reads YLGPGNSLDQGEPTNPSDAAAKEHDEAYAAYLRSGKNPYLYFSPAD. 3 disordered regions span residues 90 to 115, 136 to 179, and 497 to 531; these read VLTDTPDHPSTSRPTKPTKRSKPPPH, LAPM…VGIS, and AGRGGAQTDENQAADGDPRYAFGRQHGQKTTTTGE. Residues 161–178 are compositionally biased toward gly residues; it reads SGNGSGGGGGGGSGGVGI.

Belongs to the parvoviridae capsid protein family.

It localises to the virion. In terms of biological role, capsid protein self-assembles to form an icosahedral capsid with a T=1 symmetry, about 22 nm in diameter, and consisting of 60 copies of two size variants of the capsid proteins, VP1 and VP2, which differ by the presence of an N-terminal extension in the minor protein VP1. The capsid encapsulates the genomic ssDNA. Capsid proteins are responsible for the attachment to host cell receptors. This attachment induces virion internalization predominantly through clathrin-dependent endocytosis. Binding to the host receptors also induces capsid rearrangements leading to surface exposure of VP1 N-terminus, specifically its phospholipase A2-like region and putative nuclear localization signal(s). VP1 N-terminus might serve as a lipolytic enzyme to breach the endosomal membrane during entry into host cell and might contribute to virus transport to the nucleus. The polypeptide is Capsid protein VP1 (Neovison vison (American mink)).